A 142-amino-acid polypeptide reads, in one-letter code: Large ribosomal subunit protein uL11 (142 aa).

It belongs to the universal ribosomal protein uL11 family. In terms of assembly, part of the ribosomal stalk of the 50S ribosomal subunit. Interacts with L10 and the large rRNA to form the base of the stalk. L10 forms an elongated spine to which L12 dimers bind in a sequential fashion forming a multimeric L10(L12)X complex. Post-translationally, one or more lysine residues are methylated.

Forms part of the ribosomal stalk which helps the ribosome interact with GTP-bound translation factors. In Mesoplasma florum (strain ATCC 33453 / NBRC 100688 / NCTC 11704 / L1) (Acholeplasma florum), this protein is Large ribosomal subunit protein uL11.